A 186-amino-acid polypeptide reads, in one-letter code: ADP-ribosylation factor-like protein 8A (186 aa).

Residues 1-19 (MIALFNKLLDWFKALFWKE) constitute an intramembrane region (note=Mediates targeting to membranes). GTP contacts are provided by residues 29–35 (QYSGKTT), 71–75 (DIGGQ), and 130–133 (NKRD).

The protein belongs to the small GTPase superfamily. Arf family. Interacts with PLEKHM1. When GTP-bound, interacts with RUFY3 and RUFY4, but not with RUFY1, nor RUFY2. In terms of tissue distribution, ubiquitously expressed.

Its subcellular location is the late endosome membrane. It is found in the lysosome membrane. It localises to the cytoplasm. The protein resides in the cytoskeleton. The protein localises to the spindle. Its subcellular location is the cell projection. It is found in the axon. It localises to the synapse. Functionally, plays a role in lysosome motility. In neurons, mediates the anterograde axonal long-range transport of presynaptic lysosome-related vesicles required for presynaptic biogenesis and synaptic function. May play a role in chromosome segregation. This chain is ADP-ribosylation factor-like protein 8A (ARL8A), found in Homo sapiens (Human).